A 334-amino-acid polypeptide reads, in one-letter code: Formamidase (334 aa).

The CN hydrolase domain occupies 14 to 260 (FLVAAIQFPV…WEIVTGEIYP (247 aa)). Catalysis depends on Glu-60, which acts as the Proton acceptor. Lys-133 functions as the Proton donor in the catalytic mechanism. Cys-166 functions as the Nucleophile in the catalytic mechanism.

The protein belongs to the carbon-nitrogen hydrolase superfamily. Aliphatic amidase family.

The catalysed reaction is formamide + H2O = formate + NH4(+). Is an aliphatic amidase with a restricted substrate specificity, as it only hydrolyzes formamide. This Helicobacter pylori (strain Shi470) protein is Formamidase.